The primary structure comprises 351 residues: Synaptonemal complex central element protein 1 (351 aa).

Residues 1-10 (MAGRSLTSKA) are compositionally biased toward polar residues. 2 disordered regions span residues 1 to 31 (MAGRSLTSKAEPTAGAVDRAEKAGGQDTSSQ) and 267 to 351 (KCQQ…KELF). Positions 52–290 (RVEVLINRIN…ELEKHGMQVP (239 aa)) form a coiled coil.

The protein belongs to the SYCE family. As to quaternary structure, homodimer. Found in a complex with SYCP1 and SYCE2. Interacts with SYCP1, SYCE2 and SYCE3. Interacts with SIX6OS1.

It localises to the nucleus. The protein localises to the chromosome. Its function is as follows. Major component of the transverse central element of synaptonemal complexes (SCS), formed between homologous chromosomes during meiotic prophase. Requires SYCP1 in order to be incorporated into the central element. May have a role in the synaptonemal complex assembly, stabilization and recombination. This Homo sapiens (Human) protein is Synaptonemal complex central element protein 1 (SYCE1).